The primary structure comprises 158 residues: UPF0262 protein Rsph17025_0594 (158 aa).

Belongs to the UPF0262 family.

The polypeptide is UPF0262 protein Rsph17025_0594 (Cereibacter sphaeroides (strain ATCC 17025 / ATH 2.4.3) (Rhodobacter sphaeroides)).